We begin with the raw amino-acid sequence, 282 residues long: 4-diphosphocytidyl-2-C-methyl-D-erythritol kinase (282 aa).

Lys15 is a catalytic residue. 98–108 provides a ligand contact to ATP; sequence PMGGGVGGGSS. The active site involves Asp140.

The protein belongs to the GHMP kinase family. IspE subfamily.

The enzyme catalyses 4-CDP-2-C-methyl-D-erythritol + ATP = 4-CDP-2-C-methyl-D-erythritol 2-phosphate + ADP + H(+). Its pathway is isoprenoid biosynthesis; isopentenyl diphosphate biosynthesis via DXP pathway; isopentenyl diphosphate from 1-deoxy-D-xylulose 5-phosphate: step 3/6. In terms of biological role, catalyzes the phosphorylation of the position 2 hydroxy group of 4-diphosphocytidyl-2C-methyl-D-erythritol. The chain is 4-diphosphocytidyl-2-C-methyl-D-erythritol kinase from Azoarcus sp. (strain BH72).